Here is an 82-residue protein sequence, read N- to C-terminus: MNRLMILVFAAVFLALASADEDVDIAKRGIPCLCVSDGPSTRGNKLSGTIWMKTGGYGGNGCPKGWHFCGKSRGLLSDCCKQ.

The N-terminal stretch at 1–19 (MNRLMILVFAAVFLALASA) is a signal peptide. Positions 20-26 (DEDVDIA) are excised as a propeptide. 3 cysteine pairs are disulfide-bonded: Cys-32–Cys-79, Cys-34–Cys-69, and Cys-62–Cys-80.

This sequence belongs to the sea anemone sodium channel inhibitory toxin family. Type I subfamily.

The protein resides in the secreted. It is found in the nematocyst. Binds specifically to voltage-gated sodium channels (Nav), thereby delaying their inactivation during signal transduction. Causes death to crabs (minimum lethal dose of 25 ug/kg) and mice. This Actinia equina (Beadlet anemone) protein is Delta-actitoxin-Aeq2a.